Consider the following 127-residue polypeptide: Fluoride-specific ion channel FluC (127 aa).

4 helical membrane-spanning segments follow: residues 4 to 24, 34 to 54, 65 to 85, and 97 to 117; these read IIYI…TQIA, FPFP…IGFF, FELR…FSTL, and FYGI…LAVL. Residues glycine 77 and threonine 80 each contribute to the Na(+) site.

It belongs to the fluoride channel Fluc/FEX (TC 1.A.43) family.

Its subcellular location is the cell inner membrane. It carries out the reaction fluoride(in) = fluoride(out). Na(+) is not transported, but it plays an essential structural role and its presence is essential for fluoride channel function. In terms of biological role, fluoride-specific ion channel. Important for reducing fluoride concentration in the cell, thus reducing its toxicity. The protein is Fluoride-specific ion channel FluC of Bacteroides fragilis (strain ATCC 25285 / DSM 2151 / CCUG 4856 / JCM 11019 / LMG 10263 / NCTC 9343 / Onslow / VPI 2553 / EN-2).